The chain runs to 95 residues: UPF0235 protein MS0322 (95 aa).

Belongs to the UPF0235 family.

The protein is UPF0235 protein MS0322 of Mannheimia succiniciproducens (strain KCTC 0769BP / MBEL55E).